The chain runs to 317 residues: Ornithine carbamoyltransferase (317 aa).

Carbamoyl phosphate contacts are provided by residues 54 to 57 (STRT), glutamine 81, arginine 105, and 132 to 135 (HPCQ). L-ornithine contacts are provided by residues asparagine 163, aspartate 227, and 231–232 (SM). Residues 267–268 (CL) and arginine 295 contribute to the carbamoyl phosphate site.

The protein belongs to the aspartate/ornithine carbamoyltransferase superfamily. OTCase family.

The protein localises to the cytoplasm. The enzyme catalyses carbamoyl phosphate + L-ornithine = L-citrulline + phosphate + H(+). Its pathway is amino-acid biosynthesis; L-arginine biosynthesis; L-arginine from L-ornithine and carbamoyl phosphate: step 1/3. Reversibly catalyzes the transfer of the carbamoyl group from carbamoyl phosphate (CP) to the N(epsilon) atom of ornithine (ORN) to produce L-citrulline. The protein is Ornithine carbamoyltransferase of Parafrankia sp. (strain EAN1pec).